A 73-amino-acid polypeptide reads, in one-letter code: Sec-independent protein translocase protein TatA (73 aa).

Residues 1–21 (MGSFSIWHWLIVLVIVMLVFG) traverse the membrane as a helical segment. The disordered stretch occupies residues 50 to 73 (KEQIQQSSATAEKTVDVQAKDVNK). The segment covering 62–73 (KTVDVQAKDVNK) has biased composition (basic and acidic residues).

This sequence belongs to the TatA/E family. The Tat system comprises two distinct complexes: a TatABC complex, containing multiple copies of TatA, TatB and TatC subunits, and a separate TatA complex, containing only TatA subunits. Substrates initially bind to the TatABC complex, which probably triggers association of the separate TatA complex to form the active translocon.

It localises to the cell inner membrane. Functionally, part of the twin-arginine translocation (Tat) system that transports large folded proteins containing a characteristic twin-arginine motif in their signal peptide across membranes. TatA could form the protein-conducting channel of the Tat system. This chain is Sec-independent protein translocase protein TatA, found in Polynucleobacter necessarius subsp. necessarius (strain STIR1).